The chain runs to 116 residues: MDKKTSRLRRATRARKKIQELGVNRLVVHRTPRHTYAQVISPANVVLAAASTAEKAVSEQLKYTGNVDAAKAVGKTVAERAIEKGVAVVAFDRSGFKYHGRVAALADAAREAGLKF.

It belongs to the universal ribosomal protein uL18 family. Part of the 50S ribosomal subunit; part of the 5S rRNA/L5/L18/L25 subcomplex. Contacts the 5S and 23S rRNAs.

Functionally, this is one of the proteins that bind and probably mediate the attachment of the 5S RNA into the large ribosomal subunit, where it forms part of the central protuberance. The chain is Large ribosomal subunit protein uL18 from Shewanella piezotolerans (strain WP3 / JCM 13877).